Here is a 341-residue protein sequence, read N- to C-terminus: Ribosomal RNA small subunit methyltransferase H (341 aa).

Residues 47–49 (GGY), Asp-64, Phe-91, Asp-109, and Gln-116 each bind S-adenosyl-L-methionine.

It belongs to the methyltransferase superfamily. RsmH family.

Its subcellular location is the cytoplasm. It catalyses the reaction cytidine(1402) in 16S rRNA + S-adenosyl-L-methionine = N(4)-methylcytidine(1402) in 16S rRNA + S-adenosyl-L-homocysteine + H(+). Specifically methylates the N4 position of cytidine in position 1402 (C1402) of 16S rRNA. The sequence is that of Ribosomal RNA small subunit methyltransferase H from Sinorhizobium medicae (strain WSM419) (Ensifer medicae).